A 426-amino-acid chain; its full sequence is Lactate racemase (426 aa).

72 to 75 provides a ligand contact to Ni(II)-pyridinium-3,5-bisthiocarboxylate mononucleotide; that stretch reads DHTR. Active-site proton donor/acceptor residues include H108 and H174. Residues K184 and H200 each coordinate Ni(II)-pyridinium-3,5-bisthiocarboxylate mononucleotide. Positions 295 and 298 each coordinate substrate.

The protein belongs to the lactate racemase family. In terms of assembly, homodimer. Ni(II)-pyridinium-3,5-bisthiocarboxylate mononucleotide is required as a cofactor.

The enzyme catalyses (S)-lactate = (R)-lactate. Activation of the apo-enzyme requires the three accessory proteins LarB, LarE and LarC, that are involved in the biosynthesis of the nickel-pincer cofactor of LarA. In terms of biological role, catalyzes the interconversion between the D- and L-isomers of lactate. The polypeptide is Lactate racemase (Thermoanaerobacterium thermosaccharolyticum (strain ATCC 7956 / DSM 571 / NCIMB 9385 / NCA 3814 / NCTC 13789 / WDCM 00135 / 2032) (Clostridium thermosaccharolyticum)).